Here is a 443-residue protein sequence, read N- to C-terminus: Exodeoxyribonuclease 7 large subunit (443 aa).

This sequence belongs to the XseA family. As to quaternary structure, heterooligomer composed of large and small subunits.

Its subcellular location is the cytoplasm. The catalysed reaction is Exonucleolytic cleavage in either 5'- to 3'- or 3'- to 5'-direction to yield nucleoside 5'-phosphates.. In terms of biological role, bidirectionally degrades single-stranded DNA into large acid-insoluble oligonucleotides, which are then degraded further into small acid-soluble oligonucleotides. This is Exodeoxyribonuclease 7 large subunit from Vibrio vulnificus (strain YJ016).